The following is a 759-amino-acid chain: Catalase-peroxidase (759 aa).

The tract at residues 1–24 (MTQDKCPFKEQPSQPNFAGGGTSN) is disordered. A cross-link (tryptophyl-tyrosyl-methioninium (Trp-Tyr) (with M-268)) is located at residues 96–242 (WHSAGTYRVF…LAAAHMGLIY (147 aa)). The Proton acceptor role is filled by histidine 97. Positions 242-268 (YVNPEGPDGNPDPIAAAHDIRDTFGRM) form a cross-link, tryptophyl-tyrosyl-methioninium (Tyr-Met) (with W-96). Position 283 (histidine 283) interacts with heme b.

It belongs to the peroxidase family. Peroxidase/catalase subfamily. In terms of assembly, homodimer or homotetramer. Heme b is required as a cofactor. Formation of the three residue Trp-Tyr-Met cross-link is important for the catalase, but not the peroxidase activity of the enzyme.

The protein localises to the cytoplasm. It carries out the reaction H2O2 + AH2 = A + 2 H2O. The catalysed reaction is 2 H2O2 = O2 + 2 H2O. Its function is as follows. Bifunctional enzyme with both catalase and broad-spectrum peroxidase activity. In Neosartorya fischeri (strain ATCC 1020 / DSM 3700 / CBS 544.65 / FGSC A1164 / JCM 1740 / NRRL 181 / WB 181) (Aspergillus fischerianus), this protein is Catalase-peroxidase.